A 539-amino-acid chain; its full sequence is Chaperonin GroEL (539 aa).

ATP is bound by residues 29 to 32, 86 to 90, Gly413, 477 to 479, and Asp493; these read TLGP, DGTTT, and DAL.

This sequence belongs to the chaperonin (HSP60) family. Forms a cylinder of 14 subunits composed of two heptameric rings stacked back-to-back. Interacts with the co-chaperonin GroES.

Its subcellular location is the cytoplasm. It catalyses the reaction ATP + H2O + a folded polypeptide = ADP + phosphate + an unfolded polypeptide.. In terms of biological role, together with its co-chaperonin GroES, plays an essential role in assisting protein folding. The GroEL-GroES system forms a nano-cage that allows encapsulation of the non-native substrate proteins and provides a physical environment optimized to promote and accelerate protein folding. This is Chaperonin GroEL from Clostridium perfringens (strain 13 / Type A).